An 835-amino-acid chain; its full sequence is Ribonucleoside-diphosphate reductase large subunit (835 aa).

Substrate contacts are provided by residues Ser222, 237 to 238, Gly266, 447 to 451, and 660 to 664; these read SC, NLCCE, and PSASS. Cys238 and Cys464 are joined by a disulfide. The active-site Proton acceptor is Asn447. Residue Cys449 is the Cysteine radical intermediate of the active site. Glu451 functions as the Proton acceptor in the catalytic mechanism.

This sequence belongs to the ribonucleoside diphosphate reductase large chain family. As to quaternary structure, heterotetramer composed of a homodimer of the large subunit (R1) and a homodimer of the small subunit (R2). Larger multisubunit protein complex are also active, composed of (R1)n(R2)n.

The enzyme catalyses a 2'-deoxyribonucleoside 5'-diphosphate + [thioredoxin]-disulfide + H2O = a ribonucleoside 5'-diphosphate + [thioredoxin]-dithiol. In terms of biological role, ribonucleoside-diphosphate reductase holoenzyme provides the precursors necessary for viral DNA synthesis. Allows virus growth in non-dividing cells. Catalyzes the biosynthesis of deoxyribonucleotides from the corresponding ribonucleotides. This is Ribonucleoside-diphosphate reductase large subunit from Magallana gigas (Pacific oyster).